The primary structure comprises 159 residues: Small ribosomal subunit protein uS7 (159 aa).

This sequence belongs to the universal ribosomal protein uS7 family. In terms of assembly, part of the 30S ribosomal subunit. Contacts proteins S9 and S11.

Functionally, one of the primary rRNA binding proteins, it binds directly to 16S rRNA where it nucleates assembly of the head domain of the 30S subunit. Is located at the subunit interface close to the decoding center, probably blocks exit of the E-site tRNA. This Wolbachia sp. subsp. Brugia malayi (strain TRS) protein is Small ribosomal subunit protein uS7.